The primary structure comprises 236 residues: tRNA1(Val) (adenine(37)-N6)-methyltransferase (236 aa).

The protein belongs to the methyltransferase superfamily. tRNA (adenine-N(6)-)-methyltransferase family.

It is found in the cytoplasm. It carries out the reaction adenosine(37) in tRNA1(Val) + S-adenosyl-L-methionine = N(6)-methyladenosine(37) in tRNA1(Val) + S-adenosyl-L-homocysteine + H(+). Its function is as follows. Specifically methylates the adenine in position 37 of tRNA(1)(Val) (anticodon cmo5UAC). This chain is tRNA1(Val) (adenine(37)-N6)-methyltransferase, found in Aeromonas salmonicida (strain A449).